The chain runs to 114 residues: Tyrosine-protein phosphatase 27 (114 aa).

Residues 1–114 (WQMIVEHKCC…ELGNDNPIVV (114 aa)) enclose the Tyrosine-protein phosphatase domain. D82 serves as a coordination point for substrate.

Belongs to the protein-tyrosine phosphatase family.

It carries out the reaction O-phospho-L-tyrosyl-[protein] + H2O = L-tyrosyl-[protein] + phosphate. This is Tyrosine-protein phosphatase 27 (STY-27) from Styela plicata (Wrinkled sea squirt).